We begin with the raw amino-acid sequence, 350 residues long: tRNA uridine(34) hydroxylase (350 aa).

Residues 146-240 form the Rhodanese domain; sequence DDPDALFIDM…YARKAREQGL (95 aa). The Cysteine persulfide intermediate role is filled by Cys200.

Belongs to the TrhO family.

It carries out the reaction uridine(34) in tRNA + AH2 + O2 = 5-hydroxyuridine(34) in tRNA + A + H2O. Functionally, catalyzes oxygen-dependent 5-hydroxyuridine (ho5U) modification at position 34 in tRNAs, the first step in 5-carboxymethoxyuridine (cmo5U) biosynthesis. May be part of an alternate pathway, which is able to bypass cmo5U biogenesis in a subset of tRNAs under aerobic conditions. The sequence is that of tRNA uridine(34) hydroxylase from Escherichia coli O81 (strain ED1a).